A 191-amino-acid polypeptide reads, in one-letter code: Thymidine kinase (191 aa).

Residues 9 to 16 (GSMNSGKT) and 85 to 88 (DESQ) each bind ATP. Residue glutamate 86 is the Proton acceptor of the active site. Residues cysteine 143, cysteine 146, cysteine 181, and cysteine 184 each coordinate Zn(2+).

Belongs to the thymidine kinase family. In terms of assembly, homotetramer.

The protein resides in the cytoplasm. The enzyme catalyses thymidine + ATP = dTMP + ADP + H(+). The protein is Thymidine kinase of Listeria monocytogenes serovar 1/2a (strain ATCC BAA-679 / EGD-e).